We begin with the raw amino-acid sequence, 480 residues long: tRNA-2-methylthio-N(6)-dimethylallyladenosine synthase (480 aa).

The MTTase N-terminal domain occupies 29–145 (GSFWIQTFGC…LEALLTQVDN (117 aa)). Positions 38, 74, 108, 180, 184, and 187 each coordinate [4Fe-4S] cluster. The region spanning 166 to 403 (RDSTICAWVN…NALVERVALQ (238 aa)) is the Radical SAM core domain. A TRAM domain is found at 406–474 (SRYSGKVEQV…AFSLSGTPCD (69 aa)).

This sequence belongs to the methylthiotransferase family. MiaB subfamily. Monomer. [4Fe-4S] cluster serves as cofactor.

The protein resides in the cytoplasm. The enzyme catalyses N(6)-dimethylallyladenosine(37) in tRNA + (sulfur carrier)-SH + AH2 + 2 S-adenosyl-L-methionine = 2-methylsulfanyl-N(6)-dimethylallyladenosine(37) in tRNA + (sulfur carrier)-H + 5'-deoxyadenosine + L-methionine + A + S-adenosyl-L-homocysteine + 2 H(+). Catalyzes the methylthiolation of N6-(dimethylallyl)adenosine (i(6)A), leading to the formation of 2-methylthio-N6-(dimethylallyl)adenosine (ms(2)i(6)A) at position 37 in tRNAs that read codons beginning with uridine. The chain is tRNA-2-methylthio-N(6)-dimethylallyladenosine synthase from Prochlorococcus marinus (strain MIT 9303).